The following is a 2270-amino-acid chain: Protein DOP1B (2270 aa).

Disordered stretches follow at residues 548 to 572 (METP…VEGE), 697 to 716 (LKQR…TEEE), and 1084 to 1145 (QEQD…DMPR). Residues 1095 to 1145 (ADTSTGHNDSDNTSSFTPSSVDLSSDQNYRDNTAGQVTHKNTGQQNMDMPR) are compositionally biased toward polar residues.

Belongs to the DOP1 family.

The protein resides in the golgi apparatus membrane. May be involved in protein traffic between late Golgi and early endosomes. The chain is Protein DOP1B (dop1b) from Xenopus laevis (African clawed frog).